The primary structure comprises 394 residues: Elongation factor Tu (394 aa).

The 195-residue stretch at 10–204 (KLHINVGTIG…VLDSYIPEPK (195 aa)) folds into the tr-type G domain. Residues 19 to 26 (GHVDHGKT) form a G1 region. 19 to 26 (GHVDHGKT) serves as a coordination point for GTP. Threonine 26 contributes to the Mg(2+) binding site. Positions 60–64 (GITIN) are G2. Residues 81-84 (DCPG) are G3. GTP contacts are provided by residues 81–85 (DCPGH) and 136–139 (NKCD). Residues 136-139 (NKCD) form a G4 region. The G5 stretch occupies residues 174-176 (SAL).

It belongs to the TRAFAC class translation factor GTPase superfamily. Classic translation factor GTPase family. EF-Tu/EF-1A subfamily. In terms of assembly, monomer.

It is found in the cytoplasm. It carries out the reaction GTP + H2O = GDP + phosphate + H(+). Functionally, GTP hydrolase that promotes the GTP-dependent binding of aminoacyl-tRNA to the A-site of ribosomes during protein biosynthesis. This Baumannia cicadellinicola subsp. Homalodisca coagulata protein is Elongation factor Tu.